The sequence spans 726 residues: Dipeptidyl-peptidase 5 (726 aa).

Positions 1 to 19 are cleaved as a signal peptide; that stretch reads MAAAKWLIASLAFASSGLA. Asparagine 96 and asparagine 252 each carry an N-linked (GlcNAc...) asparagine glycan. The disordered stretch occupies residues 269–291; it reads AEPINKRNGPRTPQGIEGASSSP. Serine 558 serves as the catalytic Charge relay system. N-linked (GlcNAc...) asparagine glycosylation occurs at asparagine 605. Residues aspartate 641 and histidine 673 each act as charge relay system in the active site. N-linked (GlcNAc...) asparagine glycosylation is present at asparagine 699.

Belongs to the peptidase S9C family.

Its subcellular location is the secreted. The sequence is that of Dipeptidyl-peptidase 5 (DPPV) from Arthroderma benhamiae (Trichophyton mentagrophytes).